Reading from the N-terminus, the 463-residue chain is HEPACAM family member 2 (463 aa).

An N-terminal signal peptide occupies residues 1-32; the sequence is MGQDAFMELLRSMVGLSLCKIHLLLIAGSCLG. Asn-86, Asn-130, and Asn-166 each carry an N-linked (GlcNAc...) asparagine glycan. 2 consecutive Ig-like C2-type domains span residues 150–234 and 236–332; these read PMVQ…SDII and PTIY…TRFT. Intrachain disulfides connect Cys-171/Cys-220 and Cys-271/Cys-316. An N-linked (GlcNAc...) asparagine glycan is attached at Asn-321. A helical membrane pass occupies residues 353–373; sequence LASITGISLFLIISMCLLFLW. At 374-463 the chain is on the cytoplasmic side; it reads KKYQPYKAIR…IPEQQQENTE (90 aa).

In terms of processing, poly-ADP-ribosylated (PARsylated) by tankyrase TNKS during late G2 and prophase, leading to translocation to mitotic centrosomes. Post-translationally, N-glycosylated.

It localises to the golgi apparatus membrane. The protein localises to the cytoplasm. Its subcellular location is the cytoskeleton. It is found in the spindle. The protein resides in the microtubule organizing center. It localises to the centrosome. The protein localises to the midbody. Functionally, required during prometaphase for centrosome maturation. Following poly-ADP-ribosylation (PARsylation) by TNKS, translocates from the Golgi apparatus to mitotic centrosomes and plays a key role in the formation of robust microtubules for prompt movement of chromosomes: anchors AKAP9/CG-NAP, a scaffold protein of the gamma-tubulin ring complex and promotes centrosome maturation. The polypeptide is HEPACAM family member 2 (Hepacam2) (Mus musculus (Mouse)).